Consider the following 371-residue polypeptide: Probable tRNA sulfurtransferase (371 aa).

In terms of domain architecture, THUMP spans 54–156 (NANIEALSEV…NEMTYFYHKV (103 aa)). ATP is bound by residues 174–175 (LF), 199–200 (NF), Lys-254, Gly-276, and Gln-285.

Belongs to the ThiI family.

The protein localises to the cytoplasm. The enzyme catalyses [ThiI sulfur-carrier protein]-S-sulfanyl-L-cysteine + a uridine in tRNA + 2 reduced [2Fe-2S]-[ferredoxin] + ATP + H(+) = [ThiI sulfur-carrier protein]-L-cysteine + a 4-thiouridine in tRNA + 2 oxidized [2Fe-2S]-[ferredoxin] + AMP + diphosphate. It catalyses the reaction [ThiS sulfur-carrier protein]-C-terminal Gly-Gly-AMP + S-sulfanyl-L-cysteinyl-[cysteine desulfurase] + AH2 = [ThiS sulfur-carrier protein]-C-terminal-Gly-aminoethanethioate + L-cysteinyl-[cysteine desulfurase] + A + AMP + 2 H(+). The protein operates within cofactor biosynthesis; thiamine diphosphate biosynthesis. In terms of biological role, catalyzes the ATP-dependent transfer of a sulfur to tRNA to produce 4-thiouridine in position 8 of tRNAs, which functions as a near-UV photosensor. Also catalyzes the transfer of sulfur to the sulfur carrier protein ThiS, forming ThiS-thiocarboxylate. This is a step in the synthesis of thiazole, in the thiamine biosynthesis pathway. The sulfur is donated as persulfide by IscS. In Saccharolobus solfataricus (strain ATCC 35092 / DSM 1617 / JCM 11322 / P2) (Sulfolobus solfataricus), this protein is Probable tRNA sulfurtransferase.